Consider the following 759-residue polypeptide: DNA topoisomerase 4 subunit A (759 aa).

The Topo IIA-type catalytic domain occupies L44–A516. Y132 functions as the O-(5'-phospho-DNA)-tyrosine intermediate in the catalytic mechanism.

It belongs to the type II topoisomerase GyrA/ParC subunit family. ParC type 1 subfamily. Heterotetramer composed of ParC and ParE.

The protein resides in the cell membrane. It carries out the reaction ATP-dependent breakage, passage and rejoining of double-stranded DNA.. In terms of biological role, topoisomerase IV is essential for chromosome segregation. It relaxes supercoiled DNA. Performs the decatenation events required during the replication of a circular DNA molecule. This Caulobacter vibrioides (strain ATCC 19089 / CIP 103742 / CB 15) (Caulobacter crescentus) protein is DNA topoisomerase 4 subunit A.